The primary structure comprises 246 residues: tRNA (guanine-N(1)-)-methyltransferase (246 aa).

S-adenosyl-L-methionine is bound by residues G112 and 131–136 (IGDYVL).

It belongs to the RNA methyltransferase TrmD family. As to quaternary structure, homodimer.

The protein resides in the cytoplasm. The catalysed reaction is guanosine(37) in tRNA + S-adenosyl-L-methionine = N(1)-methylguanosine(37) in tRNA + S-adenosyl-L-homocysteine + H(+). In terms of biological role, specifically methylates guanosine-37 in various tRNAs. The polypeptide is tRNA (guanine-N(1)-)-methyltransferase (Thermosipho africanus (strain TCF52B)).